The primary structure comprises 817 residues: Phospholipase D alpha 2 (817 aa).

In terms of domain architecture, C2 spans 1–130 (MAHLLLHGTL…LSGEAIERRL (130 aa)). D192 serves as a coordination point for Ca(2+). The region spanning 333-372 (YMITHHQKTVIVDHDMPVPRGGGSRRIVSFVGGLDLCDGR) is the PLD phosphodiesterase 1 domain. Catalysis depends on residues H338, K340, and D345. H338 contacts a 1,2-diacyl-sn-glycero-3-phosphate. H378 and H412 together coordinate Ca(2+). Positions 529 and 668 each coordinate a 1,2-diacyl-sn-glycero-3-phosphate. Residues 663 to 690 (FMIYVHSKMMIVDDEYIIVGSANINQRS) form the PLD phosphodiesterase 2 domain. Residues H668, K670, and D675 contribute to the active site. Residue E730 participates in Ca(2+) binding.

The protein belongs to the phospholipase D family. C2-PLD subfamily. Requires Ca(2+) as cofactor.

It catalyses the reaction a 1,2-diacyl-sn-glycero-3-phosphocholine + H2O = a 1,2-diacyl-sn-glycero-3-phosphate + choline + H(+). Functionally, hydrolyzes glycerol-phospholipids at the terminal phosphodiesteric bond. Plays an important role in various cellular processes. The chain is Phospholipase D alpha 2 (PLD2) from Oryza sativa subsp. japonica (Rice).